A 229-amino-acid polypeptide reads, in one-letter code: Peptidase E (229 aa).

Residues S120, D135, and H157 each act as charge relay system in the active site.

This sequence belongs to the peptidase S51 family.

It localises to the cytoplasm. It catalyses the reaction Dipeptidase E catalyzes the hydrolysis of dipeptides Asp-|-Xaa. It does not act on peptides with N-terminal Glu, Asn or Gln, nor does it cleave isoaspartyl peptides.. Functionally, hydrolyzes dipeptides containing N-terminal aspartate residues. May play a role in allowing the cell to use peptide aspartate to spare carbon otherwise required for the synthesis of the aspartate family of amino acids. The chain is Peptidase E from Salmonella paratyphi A (strain AKU_12601).